Reading from the N-terminus, the 624-residue chain is Matrilin-4 (624 aa).

An N-terminal signal peptide occupies residues 1–21 (MRGPCCWPLSLLLLFLQSWET). The 180-residue stretch at 36–215 (DLVFMIDSSR…EFGLQFQGRL (180 aa)) folds into the VWFA 1 domain. Asparagine 71 carries an N-linked (GlcNAc...) asparagine glycan. 4 consecutive EGF-like domains span residues 217–257 (GKDL…KNCL), 258–298 (ALDL…RSCR), 299–339 (AIDY…RSCR), and 340–380 (VRDF…KSCD). Disulfide bonds link cysteine 221-cysteine 232, cysteine 228-cysteine 241, cysteine 243-cysteine 256, cysteine 262-cysteine 273, cysteine 269-cysteine 282, cysteine 284-cysteine 297, cysteine 303-cysteine 314, cysteine 310-cysteine 323, cysteine 325-cysteine 338, cysteine 344-cysteine 355, cysteine 351-cysteine 364, and cysteine 366-cysteine 379. The N-linked (GlcNAc...) asparagine glycan is linked to asparagine 307. One can recognise a VWFA 2 domain in the interval 388–563 (DLVLLVDGSK…STMTHLLENL (176 aa)). A coiled-coil region spans residues 590-623 (EFQGRTLGALESLTQNLARLTERLEELENQLASR).

In terms of assembly, interacts with COMP. Lung, brain, sternum, kidney and heart.

Its subcellular location is the secreted. In terms of biological role, major component of the extracellular matrix of cartilage. This chain is Matrilin-4 (Matn4), found in Mus musculus (Mouse).